The following is a 506-amino-acid chain: Lysine--tRNA ligase (506 aa).

Mg(2+) is bound by residues glutamate 411 and glutamate 418.

This sequence belongs to the class-II aminoacyl-tRNA synthetase family. In terms of assembly, homodimer. Requires Mg(2+) as cofactor.

Its subcellular location is the cytoplasm. The catalysed reaction is tRNA(Lys) + L-lysine + ATP = L-lysyl-tRNA(Lys) + AMP + diphosphate. In Thermosynechococcus vestitus (strain NIES-2133 / IAM M-273 / BP-1), this protein is Lysine--tRNA ligase.